We begin with the raw amino-acid sequence, 186 residues long: Large ribosomal subunit protein uL5 (186 aa).

It belongs to the universal ribosomal protein uL5 family. As to quaternary structure, part of the 50S ribosomal subunit; part of the 5S rRNA/L5/L18/L25 subcomplex. Contacts the 5S rRNA and the P site tRNA. Forms a bridge to the 30S subunit in the 70S ribosome.

Functionally, this is one of the proteins that bind and probably mediate the attachment of the 5S RNA into the large ribosomal subunit, where it forms part of the central protuberance. In the 70S ribosome it contacts protein S13 of the 30S subunit (bridge B1b), connecting the 2 subunits; this bridge is implicated in subunit movement. Contacts the P site tRNA; the 5S rRNA and some of its associated proteins might help stabilize positioning of ribosome-bound tRNAs. The chain is Large ribosomal subunit protein uL5 from Ruegeria pomeroyi (strain ATCC 700808 / DSM 15171 / DSS-3) (Silicibacter pomeroyi).